The primary structure comprises 303 residues: 2-phospho-L-lactate transferase (303 aa).

D48 and K87 together coordinate 7,8-didemethyl-8-hydroxy-5-deazariboflavin.

It belongs to the CofD family. In terms of assembly, homodimer. It depends on Mg(2+) as a cofactor.

The catalysed reaction is (2S)-lactyl-2-diphospho-5'-guanosine + 7,8-didemethyl-8-hydroxy-5-deazariboflavin = oxidized coenzyme F420-0 + GMP + H(+). Its pathway is cofactor biosynthesis; coenzyme F420 biosynthesis. Its function is as follows. Catalyzes the transfer of the 2-phospholactate moiety from (2S)-lactyl-2-diphospho-5'-guanosine to 7,8-didemethyl-8-hydroxy-5-deazariboflavin (FO) with the formation of oxidized coenzyme F420-0 and GMP. This is 2-phospho-L-lactate transferase from Methanosarcina mazei (strain ATCC BAA-159 / DSM 3647 / Goe1 / Go1 / JCM 11833 / OCM 88) (Methanosarcina frisia).